We begin with the raw amino-acid sequence, 634 residues long: DNA gyrase subunit B (634 aa).

The ATPase domain stretch occupies residues 1–220 (MSYDASAIRV…EEVFLDKGGV (220 aa)). Residues 221 to 390 (ASFAKALAEG…EAARKARELV (170 aa)) are transducer domain. The Toprim domain maps to 416-534 (AELFIVEGDS…RGHVYIAQPP (119 aa)). Mg(2+) contacts are provided by E422, D499, and D501.

It belongs to the type II topoisomerase GyrB family. In terms of assembly, heterotetramer, composed of two GyrA and two GyrB chains. Non-hydrolyzable ATP analogs induce dimerization, novobiocin also induces a small amount of dimerization. The two subunits form an intertwined dimer where the GyrB ATPase transducer helix of 1 subunit connects to the Toprim domain of the other GyrB subunit through a 10 residue linker. In the heterotetramer, GyrA contains the active site tyrosine that forms a covalent intermediate with the DNA, while GyrB binds cofactors and catalyzes ATP hydrolysis. The cofactor is Mg(2+). Mn(2+) serves as cofactor. Ca(2+) is required as a cofactor.

Its subcellular location is the cytoplasm. The catalysed reaction is ATP-dependent breakage, passage and rejoining of double-stranded DNA.. Functionally, a type II topoisomerase that negatively supercoils closed circular double-stranded (ds) DNA in an ATP-dependent manner. It probably also catalyzes the interconversion of other topological isomers of double-stranded DNA rings, including catenanes. Relaxes negatively supercoiled DNA in an ATP-independent manner. At comparable concentrations T.thermophilus gyrase does not introduce as many negative supercoils into DNA as the E.coli enzyme. Negative supercoiling favors strand separation, and DNA replication, transcription, recombination and repair, all of which involve strand separation. Type II topoisomerases break and join 2 DNA strands simultaneously in an ATP-dependent manner. The chain is DNA gyrase subunit B from Thermus thermophilus (strain ATCC 27634 / DSM 579 / HB8).